A 230-amino-acid polypeptide reads, in one-letter code: uncharacterized protein (230 aa).

The N-terminal stretch at 1–22 (MNIRSFLLISIFTAISYLVVDG) is a signal peptide. Residues 23-167 (ATPRTFAPSA…YTPYGGVKAL (145 aa)) lie on the Lumenal side of the membrane. A disordered region spans residues 55–90 (SSSSSSSSISTSHDSQPSTSSSSPSSTSTSSSSGTS). The helical transmembrane segment at 168-188 (IGILVGVVVGSVFLLAIVMVI) threads the bilayer. Residues 189–230 (ARIWGPRLLANKDQNNNNEDLDSNLVSKDSEGTPQITYASNF) are Cytoplasmic-facing. The segment at 208–230 (DLDSNLVSKDSEGTPQITYASNF) is disordered.

It localises to the endoplasmic reticulum membrane. This is an uncharacterized protein from Schizosaccharomyces pombe (strain 972 / ATCC 24843) (Fission yeast).